The primary structure comprises 583 residues: Long-chain-fatty-acid--AMP ligase FadD26 (583 aa).

The protein belongs to the ATP-dependent AMP-binding enzyme family.

The catalysed reaction is holo-[(phenol)carboxyphthiodiolenone synthase] + a long-chain fatty acid + ATP = a long-chain fatty acyl-[(phenol)carboxyphthiodiolenone synthase] + AMP + diphosphate. It catalyses the reaction eicosanoate + holo-[(phenol)carboxyphthiodiolenone synthase] + ATP = icosanoyl-[(phenol)carboxyphthiodiolenone synthase] + AMP + diphosphate. The enzyme catalyses holo-[(phenol)carboxyphthiodiolenone synthase] + docosanoate + ATP = docosanoyl-[(phenol)carboxyphthiodiolenone synthase] + AMP + diphosphate. It functions in the pathway lipid metabolism; fatty acid biosynthesis. Catalyzes the activation of long-chain fatty acids as acyl-adenylates (acyl-AMP), which are then transferred to the multifunctional polyketide synthase PpsA for further chain extension. Catalyzes the adenylation of the long-chain fatty acids eicosanoate (C20) or docosanoate (C22), and potentially the very-long-chain fatty acid lignocerate (C24). Involved in the biosynthesis of phthiocerol dimycocerosate (DIM A) and phthiodiolone dimycocerosate (DIM B). The protein is Long-chain-fatty-acid--AMP ligase FadD26 (fadD26) of Mycobacterium tuberculosis (strain CDC 1551 / Oshkosh).